A 361-amino-acid chain; its full sequence is tRNA/tmRNA (uracil-C(5))-methyltransferase (361 aa).

Q185, Y213, N218, E234, and D294 together coordinate S-adenosyl-L-methionine. C319 acts as the Nucleophile in catalysis. The active-site Proton acceptor is E353.

It belongs to the class I-like SAM-binding methyltransferase superfamily. RNA M5U methyltransferase family. TrmA subfamily.

The enzyme catalyses uridine(54) in tRNA + S-adenosyl-L-methionine = 5-methyluridine(54) in tRNA + S-adenosyl-L-homocysteine + H(+). The catalysed reaction is uridine(341) in tmRNA + S-adenosyl-L-methionine = 5-methyluridine(341) in tmRNA + S-adenosyl-L-homocysteine + H(+). Its function is as follows. Dual-specificity methyltransferase that catalyzes the formation of 5-methyluridine at position 54 (m5U54) in all tRNAs, and that of position 341 (m5U341) in tmRNA (transfer-mRNA). The sequence is that of tRNA/tmRNA (uracil-C(5))-methyltransferase from Pseudomonas putida (strain ATCC 47054 / DSM 6125 / CFBP 8728 / NCIMB 11950 / KT2440).